We begin with the raw amino-acid sequence, 417 residues long: Tyrosine--tRNA ligase (417 aa).

Residue Y39 coordinates L-tyrosine. Residues 44–53 (PTASSLHAGS) carry the 'HIGH' region motif. Residues Y176 and Q180 each coordinate L-tyrosine. The short motif at 236–240 (KMGKS) is the 'KMSKS' region element. Residue K239 coordinates ATP. The S4 RNA-binding domain maps to 350-417 (AGLLALLVQA…KKKHVLIKPL (68 aa)).

This sequence belongs to the class-I aminoacyl-tRNA synthetase family. TyrS type 1 subfamily. Homodimer.

Its subcellular location is the cytoplasm. The catalysed reaction is tRNA(Tyr) + L-tyrosine + ATP = L-tyrosyl-tRNA(Tyr) + AMP + diphosphate + H(+). Catalyzes the attachment of tyrosine to tRNA(Tyr) in a two-step reaction: tyrosine is first activated by ATP to form Tyr-AMP and then transferred to the acceptor end of tRNA(Tyr). This chain is Tyrosine--tRNA ligase, found in Bartonella quintana (strain Toulouse) (Rochalimaea quintana).